The following is a 907-amino-acid chain: Probable dipeptidyl-aminopeptidase B (907 aa).

Basic and acidic residues predominate over residues 1–11 (MYDQVPYRDTD). Positions 1–71 (MYDQVPYRDT…RGKPDEDDDL (71 aa)) are disordered. Residues 1-88 (MYDQVPYRDT…LKPMERKVRR (88 aa)) lie on the Cytoplasmic side of the membrane. The span at 22–36 (SDSNRSSIDTTSTTS) shows a compositional bias: low complexity. A helical; Signal-anchor for type II membrane protein transmembrane segment spans residues 89-109 (AMYLLAFLMIGGWFLALAVYV). Over 110-907 (SREHFGTPDT…PLRKRNRELV (798 aa)) the chain is Vacuolar. N-linked (GlcNAc...) asparagine glycans are attached at residues N185 and N341. The active-site Charge relay system is S746. N-linked (GlcNAc...) asparagine glycosylation is present at N800. Catalysis depends on charge relay system residues D823 and H856.

This sequence belongs to the peptidase S9B family.

Its subcellular location is the vacuole membrane. It catalyses the reaction Release of an N-terminal dipeptide, Xaa-Yaa-|-Zaa-, from a polypeptide, preferentially when Yaa is Pro, provided Zaa is neither Pro nor hydroxyproline.. Functionally, type IV dipeptidyl-peptidase which removes N-terminal dipeptides sequentially from polypeptides having unsubstituted N-termini provided that the penultimate residue is proline. This chain is Probable dipeptidyl-aminopeptidase B (DAPB), found in Tuber melanosporum (strain Mel28) (Perigord black truffle).